The chain runs to 131 residues: uncharacterized protein (131 aa).

The MSP domain occupies 14 to 130 (FLLIYSSLEV…RRLPASFLST (117 aa)).

This is an uncharacterized protein from Caenorhabditis elegans.